A 130-amino-acid chain; its full sequence is Probable pilin MJ0835.1 (130 aa).

Positions Met1 to Ala14 are excised as a propeptide. The QXSXEXXXL signature appears at Gln15 to Leu23.

Post-translationally, the N-terminus is cleaved by the prepilin peptidase EppA, which recognizes the class III signal sequence.

It is found in the secreted. It localises to the cell surface. Its subcellular location is the fimbrium. The chain is Probable pilin MJ0835.1 from Methanocaldococcus jannaschii (strain ATCC 43067 / DSM 2661 / JAL-1 / JCM 10045 / NBRC 100440) (Methanococcus jannaschii).